Reading from the N-terminus, the 84-residue chain is NAD(P)H-quinone oxidoreductase subunit O (84 aa).

Belongs to the complex I NdhO subunit family. In terms of assembly, NDH-1 can be composed of about 15 different subunits; different subcomplexes with different compositions have been identified which probably have different functions.

It localises to the cellular thylakoid membrane. It catalyses the reaction a plastoquinone + NADH + (n+1) H(+)(in) = a plastoquinol + NAD(+) + n H(+)(out). The catalysed reaction is a plastoquinone + NADPH + (n+1) H(+)(in) = a plastoquinol + NADP(+) + n H(+)(out). Its function is as follows. NDH-1 shuttles electrons from an unknown electron donor, via FMN and iron-sulfur (Fe-S) centers, to quinones in the respiratory and/or the photosynthetic chain. The immediate electron acceptor for the enzyme in this species is believed to be plastoquinone. Couples the redox reaction to proton translocation, and thus conserves the redox energy in a proton gradient. Cyanobacterial NDH-1 also plays a role in inorganic carbon-concentration. The protein is NAD(P)H-quinone oxidoreductase subunit O of Synechococcus sp. (strain CC9902).